Consider the following 230-residue polypeptide: Interleukin-22 receptor subunit alpha-2 (230 aa).

An N-terminal signal peptide occupies residues 1 to 20; it reads MMPKHCLLGLLIILLSSATE. Fibronectin type-III domains follow at residues 29–128 and 129–230; these read TPQK…TKLD and PPVV…VHIP. Intrachain disulfides connect Cys-77–Cys-85 and Cys-205–Cys-226.

Belongs to the type II cytokine receptor family. Highly expressed in lymph nodes and at lower levels in lung, spleen, and thymus. Not expressed in kidney, liver and heart.

Its subcellular location is the secreted. In terms of biological role, receptor for IL22. Binds to IL22, prevents interaction with the functional IL-22R complex and blocks the activity of IL22 (in vitro). May play an important role as an IL22 antagonist in the regulation of inflammatory responses. This is Interleukin-22 receptor subunit alpha-2 (Il22ra2) from Mus musculus (Mouse).